A 124-amino-acid polypeptide reads, in one-letter code: Fluoride-specific ion channel FluC (124 aa).

A run of 4 helical transmembrane segments spans residues 4 to 24 (LLLVALGGSIGAVFRYLISIF), 35 to 55 (FGTLLVNVLGSFLMGVIYALG), 60 to 80 (ISPELKALIGIGLLGALTTFS), and 102 to 122 (VVLNLSLCLFMVYLGQQLVFS). Residues glycine 74 and threonine 77 each contribute to the Na(+) site.

This sequence belongs to the fluoride channel Fluc/FEX (TC 1.A.43) family.

The protein resides in the cell inner membrane. It carries out the reaction fluoride(in) = fluoride(out). With respect to regulation, na(+) is not transported, but it plays an essential structural role and its presence is essential for fluoride channel function. Fluoride-specific ion channel. Important for reducing fluoride concentration in the cell, thus reducing its toxicity. The protein is Fluoride-specific ion channel FluC of Shewanella baltica (strain OS185).